Consider the following 190-residue polypeptide: Protein GrpE (190 aa).

Residues 1–31 show a composition bias toward basic and acidic residues; it reads MTEEQKKYEDAENLESKSENPEEASAEKSEN. Positions 1-39 are disordered; sequence MTEEQKKYEDAENLESKSENPEEASAEKSENGVEDLQAE.

This sequence belongs to the GrpE family. As to quaternary structure, homodimer.

The protein localises to the cytoplasm. Functionally, participates actively in the response to hyperosmotic and heat shock by preventing the aggregation of stress-denatured proteins, in association with DnaK and GrpE. It is the nucleotide exchange factor for DnaK and may function as a thermosensor. Unfolded proteins bind initially to DnaJ; upon interaction with the DnaJ-bound protein, DnaK hydrolyzes its bound ATP, resulting in the formation of a stable complex. GrpE releases ADP from DnaK; ATP binding to DnaK triggers the release of the substrate protein, thus completing the reaction cycle. Several rounds of ATP-dependent interactions between DnaJ, DnaK and GrpE are required for fully efficient folding. The polypeptide is Protein GrpE (Zymomonas mobilis subsp. mobilis (strain ATCC 31821 / ZM4 / CP4)).